Reading from the N-terminus, the 122-residue chain is Large ribosomal subunit protein bL12 (122 aa).

Belongs to the bacterial ribosomal protein bL12 family. Homodimer. Part of the 50S ribosomal subunit; present in 4 copies per ribosome. Forms part of the ribosomal stalk which helps the ribosome interact with GTP-bound translation factors. Forms a pentameric L10(L12)2(L12)2 complex, where L10 forms an elongated spine to which 2 L12 dimers bind in a sequential fashion.

Forms part of the ribosomal stalk which helps the ribosome interact with GTP-bound translation factors. Is thus essential for accurate translation. The protein is Large ribosomal subunit protein bL12 of Geobacillus stearothermophilus (Bacillus stearothermophilus).